A 778-amino-acid chain; its full sequence is Serine/threonine-protein kinase BRSK1 (778 aa).

Residues 1 to 12 (MSSGSKEGGGGS) are compositionally biased toward gly residues. Residues 1–29 (MSSGSKEGGGGSPAYHLPHPHPHPPQHAQ) are disordered. In terms of domain architecture, Protein kinase spans 34-285 (YRLEKTLGKG…LEQIQKHPWY (252 aa)). ATP is bound by residues 40-48 (LGKGQTGLV) and Lys63. Catalysis depends on Asp156, which acts as the Proton acceptor. Thr189 carries the phosphothreonine; by LKB1 modification. One can recognise a UBA domain in the interval 314–356 (ELDPDVLESMASLGCFRDRERLHRELRSEEENQEKMIYYLLLD). Residues 362–383 (PSCEDQDLPPRNDVDPPRKRVD) are compositionally biased toward basic and acidic residues. The interval 362–548 (PSCEDQDLPP…SPGGGVGGAA (187 aa)) is disordered. Phosphoserine occurs at positions 399, 443, 447, and 450. Low complexity predominate over residues 430–457 (SRSVSGASTGLSSSPLSSPRSPVFSFSP). Arg466, Arg481, Arg484, and Arg498 each carry omega-N-methylarginine. Positions 491–508 (QPPPPSARSTPLPGPPGS) are enriched in pro residues. Position 508 is a phosphoserine (Ser508). Over residues 509-533 (PRSSGGTPLHSPLHTPRASPTGTPG) the composition is skewed to low complexity. Position 525 is an omega-N-methylarginine (Arg525). Phosphothreonine is present on residues Thr529 and Thr535. Arg550 is subject to Omega-N-methylarginine. A disordered region spans residues 560–588 (FLGSPRFHRRKMQVPTAEEMSSLTPESSP). Thr583 is subject to Phosphothreonine. Residues Ser586, Ser587, and Ser601 each carry the phosphoserine modification. The segment at 719 to 778 (QPSVQALADEKNGAQTRPAGTPPRSLQPPPGRSDPDLSSSPRRGPPKDKKLLATNGTPLP) is disordered.

Belongs to the protein kinase superfamily. CAMK Ser/Thr protein kinase family. SNF1 subfamily. Mg(2+) is required as a cofactor. Phosphorylated at Thr-189 by STK11/LKB1 in complex with STE20-related adapter-alpha (STRADA) pseudo kinase and CAB39. Not phosphorylated at Thr-189 by CaMKK2. In contrast, it is phosphorylated and activated by CaMKK1. May be inactivated via dephosphorylation of Thr-189 by PP2C. In terms of tissue distribution, present in the gray matter of the brain and spinal cord (at protein level). Expressed in the nervous system, distributed within the brain and spinal cord of embryonic and postnatal animals.

Its subcellular location is the cytoplasm. It localises to the nucleus. It is found in the cytoskeleton. The protein localises to the microtubule organizing center. The protein resides in the centrosome. Its subcellular location is the synapse. It localises to the presynaptic active zone. It is found in the cytoplasmic vesicle. The protein localises to the secretory vesicle. The protein resides in the synaptic vesicle. The catalysed reaction is L-seryl-[protein] + ATP = O-phospho-L-seryl-[protein] + ADP + H(+). The enzyme catalyses L-threonyl-[protein] + ATP = O-phospho-L-threonyl-[protein] + ADP + H(+). It catalyses the reaction L-seryl-[tau protein] + ATP = O-phospho-L-seryl-[tau protein] + ADP + H(+). It carries out the reaction L-threonyl-[tau protein] + ATP = O-phospho-L-threonyl-[tau protein] + ADP + H(+). Activated by phosphorylation on Thr-189 by STK11/LKB1. Its function is as follows. Serine/threonine-protein kinase that plays a key role in polarization of neurons and centrosome duplication. Phosphorylates CDC25B, CDC25C, MAPT/TAU, RIMS1, TUBG1, TUBG2 and WEE1. Following phosphorylation and activation by STK11/LKB1, acts as a key regulator of polarization of cortical neurons, probably by mediating phosphorylation of microtubule-associated proteins such as MAPT/TAU at 'Thr-504' and 'Ser-554'. Also regulates neuron polarization by mediating phosphorylation of WEE1 at 'Ser-642' in postmitotic neurons, leading to down-regulate WEE1 activity in polarized neurons. In neurons, localizes to synaptic vesicles and plays a role in neurotransmitter release, possibly by phosphorylating RIMS1. Also acts as a positive regulator of centrosome duplication by mediating phosphorylation of gamma-tubulin (TUBG1 and TUBG2) at 'Ser-131', leading to translocation of gamma-tubulin and its associated proteins to the centrosome. Involved in the UV-induced DNA damage checkpoint response, probably by inhibiting CDK1 activity through phosphorylation and activation of WEE1, and inhibition of CDC25B and CDC25C. This Mus musculus (Mouse) protein is Serine/threonine-protein kinase BRSK1 (Brsk1).